The sequence spans 269 residues: Tryptophan synthase alpha chain (269 aa).

Residues Glu-49 and Asp-60 each act as proton acceptor in the active site.

Belongs to the TrpA family. Tetramer of two alpha and two beta chains.

The enzyme catalyses (1S,2R)-1-C-(indol-3-yl)glycerol 3-phosphate + L-serine = D-glyceraldehyde 3-phosphate + L-tryptophan + H2O. Its pathway is amino-acid biosynthesis; L-tryptophan biosynthesis; L-tryptophan from chorismate: step 5/5. Its function is as follows. The alpha subunit is responsible for the aldol cleavage of indoleglycerol phosphate to indole and glyceraldehyde 3-phosphate. This is Tryptophan synthase alpha chain from Stutzerimonas stutzeri (strain A1501) (Pseudomonas stutzeri).